Reading from the N-terminus, the 61-residue chain is Large ribosomal subunit protein uL30 (61 aa).

It belongs to the universal ribosomal protein uL30 family. In terms of assembly, part of the 50S ribosomal subunit.

This chain is Large ribosomal subunit protein uL30, found in Corynebacterium glutamicum (strain R).